A 652-amino-acid chain; its full sequence is Interferon-induced GTP-binding protein Mx1 (652 aa).

The interval 1–27 (MKERTSACRHGTPQKHPDTSEESQAME) is disordered. Residues 58 to 331 (DLALPAIAVI…LTSHICKSLP (274 aa)) form the Dynamin-type G domain. Residues 68-75 (GDQSSGKS) form a G1 motif region. Residue 68 to 75 (GDQSSGKS) coordinates GTP. A G2 motif region spans residues 93–95 (VTR). Positions 169 to 172 (DLPG) are G3 motif. GTP-binding positions include 169–173 (DLPGI) and 238–241 (TKPD). Residues 238–241 (TKPD) form a G4 motif region. Positions 270–273 (KCRG) are G5 motif. The tract at residues 332–357 (ILENQINVNHQIASEELQKYGADIPE) is bundle signaling element (BSE). The segment at 357–526 (EDDSKRLSFL…HFQMEHIVYC (170 aa)) is middle domain. The tract at residues 358–622 (DDSKRLSFLM…TSKCNWFLTE (265 aa)) is stalk. In terms of domain architecture, GED spans 564–652 (TTEMTQHLNA…AQRKLAKFSN (89 aa)).

This sequence belongs to the TRAFAC class dynamin-like GTPase superfamily. Dynamin/Fzo/YdjA family. As to quaternary structure, homooligomer. Oligomerizes into multimeric filamentous or ring-like structures by virtue of its stalk domain. Oligomerization is critical for GTPase activity, protein stability, and recognition of viral target structures. Interacts with TRPC1, TRPC3, TRPC4, TRPC5, TRPC6 and TRPC7. Interacts with HSPA5. Interacts with TUBB/TUBB5. Interacts with DDX39A and DDX39B. ISGylated.

The protein resides in the nucleus. The protein localises to the cytoplasm. It is found in the endoplasmic reticulum membrane. It localises to the perinuclear region. Its function is as follows. Interferon-induced dynamin-like GTPase which has antiviral activity against influenza A virus, (IAV) and Thogoto virus (THOV). Inhibits IAV by interfering with the process of primary transcription, probably by affecting the viral polymerase function. This is Interferon-induced GTP-binding protein Mx1 (Mx1) from Rattus norvegicus (Rat).